Here is a 224-residue protein sequence, read N- to C-terminus: Putative gastrointestinal growth factor xP4 (224 aa).

Residues 1 to 17 form the signal peptide; that stretch reads MANSVFWAIAVALVLGA. P-type domains lie at 25 to 68, 73 to 117, 123 to 167, and 173 to 216; these read YRCG…YTPW, TICN…YQPI, RDCS…FKPE, and LQCA…FYPD. 12 cysteine pairs are disulfide-bonded: Cys27/Cys53, Cys37/Cys52, Cys47/Cys64, Cys75/Cys102, Cys86/Cys101, Cys96/Cys113, Cys125/Cys152, Cys136/Cys151, Cys146/Cys163, Cys175/Cys201, Cys185/Cys200, and Cys195/Cys212. An N-linked (GlcNAc...) asparagine glycan is attached at Asn104.

In terms of processing, glycosylated. In terms of tissue distribution, stomach mucosa.

The protein localises to the secreted. May act as a growth factor. This Xenopus laevis (African clawed frog) protein is Putative gastrointestinal growth factor xP4 (p4).